Here is a 176-residue protein sequence, read N- to C-terminus: Adenylyl-sulfate kinase (176 aa).

Position 12 to 19 (glycine 12 to threonine 19) interacts with ATP. Residue serine 86 is the Phosphoserine intermediate of the active site.

Belongs to the APS kinase family.

The enzyme catalyses adenosine 5'-phosphosulfate + ATP = 3'-phosphoadenylyl sulfate + ADP + H(+). It functions in the pathway sulfur metabolism; hydrogen sulfide biosynthesis; sulfite from sulfate: step 2/3. In terms of biological role, catalyzes the synthesis of activated sulfate. This is Adenylyl-sulfate kinase from Synechococcus sp. (strain JA-3-3Ab) (Cyanobacteria bacterium Yellowstone A-Prime).